Consider the following 266-residue polypeptide: Mitochondrial genome maintenance protein MGM101 (266 aa).

Residues 1 to 23 (MLHSTKLVFRATPQALCFPVRSY) constitute a mitochondrion transit peptide. Polar residues-rich tracts occupy residues 37–47 (KTTSKLAPSIT) and 57–68 (PSLQEPQSATST). The disordered stretch occupies residues 37–68 (KTTSKLAPSITTEDEVAEQDPSLQEPQSATST).

It belongs to the MGM101 family. As to quaternary structure, forms homooligomers in vitro.

The protein localises to the mitochondrion matrix. It is found in the mitochondrion nucleoid. Its function is as follows. Plays a role in the replication of the mitochondrial genome and the maintenance of its telomeres. Able to catalyze strand annealing and D-loop formation. Binds a wide variety of DNA substrates. Exhibited the highest affinity for DNA molecules carrying 3' ssDNA overhangs (Y-form, 3' FLAP, 3' overhang) and for substrates with complex structures (X-O and Fork). Forms homogeneous ring-shaped structures at the ssDNA native telomeres ends. Oligomers seem to bind to the ssDNA as a filament until they reach the double-stranded region and induce the formation of bends and loops within the double-stranded part of the molecules. The chain is Mitochondrial genome maintenance protein MGM101 from Candida parapsilosis (strain CDC 317 / ATCC MYA-4646) (Yeast).